Reading from the N-terminus, the 451-residue chain is Tubulin gamma-2 chain (451 aa).

Serine 131 bears the Phosphoserine; by BRSK1 mark. 142 to 148 contacts GTP; sequence AGGTGSG.

The protein belongs to the tubulin family. As to quaternary structure, component of the gamma-tubulin ring complex (gTuRC) consisting of TUBGCP2, TUBGCP3, TUBGCP4, TUBGCP5 and TUBGCP6 and gamma-tubulin TUBG1 or TUBG2. TUBGCP2, TUBGCP3, TUBGCP4, TUBGCP5 and TUBGCP6 assemble in a 5:5:2:1:1 stoichiometry; each is associated with a gamma-tubulin, thereby arranging 14 gamma-tubulins in a helical manner. Gamma-tubulin at the first position is blocked by TUBGCP3 at the last position, allowing 13 protafilaments to grow into a microtubule. Interacts with alpha-beta tubulin heterodimers; the interaction allows microtubules to nucleate from the gTuRC. In terms of processing, phosphorylation at Ser-131 by BRSK1 regulates centrosome duplication, possibly by mediating relocation of gamma-tubulin and its associated proteins from the cytoplasm to the centrosome.

It localises to the cytoplasm. The protein localises to the cytoskeleton. Its subcellular location is the microtubule organizing center. It is found in the centrosome. In terms of biological role, tubulin is the major constituent of microtubules, protein filaments consisting of alpha- and beta-tubulin heterodimers. Gamma-tubulin is a key component of the gamma-tubulin ring complex (gTuRC) which mediates microtubule nucleation. The gTuRC regulates the minus-end nucleation of alpha-beta tubulin heterodimers that grow into microtubule protafilaments, a critical step in centrosome duplication and spindle formation. The sequence is that of Tubulin gamma-2 chain (TUBG2) from Homo sapiens (Human).